Reading from the N-terminus, the 396-residue chain is Seminal vesicle major clotting proteins (396 aa).

Residues 1–21 (MKSTIFFILSLLLMLENQAAG) form the signal peptide. The disordered stretch occupies residues 45–178 (MEEAVSGSGL…ASSVDHRKKG (134 aa)). Residues 60 to 152 (RGSDREESVG…RVSVRHERVE (93 aa)) show a composition bias toward basic and acidic residues. SVP-3/-4 repeat repeat units follow at residues 65–88 (EESV…RSSV), 89–112 (EEPE…RHNV), and 113–136 (EEPE…RHSA). The stretch at 137-157 (EEPEGERVSVRHERVEKTHKR) is one SVP-3/-4 repeat; truncated repeat. A propeptide spanning residues 177 to 192 (KGHIRFKRQDPIAALA) is cleaved from the precursor. SVP-1 clotting repeat units lie at residues 194–217 (IEGQ…ERFS), 218–241 (VKGQ…ERFS), 242–265 (VTGQ…ERFS), 266–289 (MTGQ…ERFS), 290–313 (MTGQ…ERFS), 314–337 (VTGQ…ERFS), 338–361 (VTGQ…ERFS), and 362–385 (VSGQ…SGFS). The interval 194–396 (IEGQDAVKDS…KGQGSLKGLI (203 aa)) is 9 X tandem repeats of SVP-1 like motif. Positions 377 to 396 (QESVQSGFSVKGQGSLKGLI) are disordered. The stretch at 386-396 (VKGQGSLKGLI) is one SVP-1 clotting 9; truncated repeat.

To the SVP-2 precursor, particularly in regions where protein processing must occur. Post-translationally, SVP-3 may be a post-translationally modified form of SVP-4. Covalent clotting of SVP-1 is catalyzed by a transglutaminase secreted by the anterior prostate through the formation of gamma-glutamyl-epsilon-lysine cross-links. The conserved 2 Lys and 1 Gln residues per functional unit seem to be the residues involved in the formation of those cross-links.

The protein resides in the secreted. SVP-1 serves as substrate in the formation of the copulatory plug. SVP-3 and SVP-4 may also contribute to the clot. This chain is Seminal vesicle major clotting proteins, found in Cavia porcellus (Guinea pig).